The primary structure comprises 423 residues: Mannose-6-phosphate isomerase (423 aa).

An N-acetylalanine modification is found at Ala-2. Residues Ser-102 and Ser-108 each carry the phosphoserine modification. Residues Gln-110, His-112, Glu-137, and His-276 each coordinate Zn(2+). The active site involves Arg-295.

It belongs to the mannose-6-phosphate isomerase type 1 family. Zn(2+) serves as cofactor.

It is found in the cytoplasm. It carries out the reaction D-mannose 6-phosphate = D-fructose 6-phosphate. The protein operates within nucleotide-sugar biosynthesis; GDP-alpha-D-mannose biosynthesis; alpha-D-mannose 1-phosphate from D-fructose 6-phosphate: step 1/2. In terms of biological role, isomerase that catalyzes the interconversion of fructose-6-P and mannose-6-P and has a critical role in the supply of D-mannose derivatives required for many eukaryotic glycosylation reactions. The protein is Mannose-6-phosphate isomerase (MPI) of Pan troglodytes (Chimpanzee).